The chain runs to 369 residues: MLNLKVAKEQATIVVAMSGGVDSSTVAAILKEDGYNVIGITMQLYNHDTAINRKGACCAGQDIYDAKFVANQLQIPHYVLNYKDKFKESVIDNFIESYINGETPLPCVQCNQSVKFHDLLNFAKDLQADALVTGHYVRRIDTANGIELHKAVDSKKDQSYFLFATTKSQLQYLHFPLGNMTKDETRYHANRYGLHIADKPDSQDICFVADGAYHNVVAKLKPNAKKPGKIVHIDGYILGEHQGIINFTIGQRRRIGISFSDPLYVINIDAQQNIVYVGPESKLFKTTFMIHSLNWLGPGNMLVEPLDVEVKVRSTHSAVRAKLYPYSNSMVKVILNEPEKAIAPGQACVIYKGDLVLGGGWIAKEQTQS.

ATP is bound by residues Ala16–Ser23 and Met42. Catalysis depends on Cys110, which acts as the Nucleophile. A disulfide bond links Cys110 and Cys206. Position 134 (Gly134) interacts with ATP. The segment at Lys156–Gln158 is interaction with tRNA. Cys206 functions as the Cysteine persulfide intermediate in the catalytic mechanism.

The protein belongs to the MnmA/TRMU family.

It is found in the cytoplasm. It carries out the reaction S-sulfanyl-L-cysteinyl-[protein] + uridine(34) in tRNA + AH2 + ATP = 2-thiouridine(34) in tRNA + L-cysteinyl-[protein] + A + AMP + diphosphate + H(+). Its function is as follows. Catalyzes the 2-thiolation of uridine at the wobble position (U34) of tRNA, leading to the formation of s(2)U34. The sequence is that of tRNA-specific 2-thiouridylase MnmA from Orientia tsutsugamushi (strain Boryong) (Rickettsia tsutsugamushi).